A 369-amino-acid polypeptide reads, in one-letter code: MHGESPIKRRESRKIWVGNVPVGGDAPIAVQSMTNTDTNDVAATVAQIQRLVDAGVDIVRVSVPDMDAAEAFGKIKKLVSVPLVADIHFDYKIALRVAELGVDCLRINPGNIGREDRVRAVVDAARDRGIPIRIGVNAGSLEKDLQKKYGEPTPAALVESALRHVEHLDRLDFQDFKVSVKASDVFMAVEAYRLLAKQIIQPLHLGITEAGGLRSGTVKSAVGLGMLLAEGIGDTIRISLAADPVEEVKVGYDILKSLHLRSRGINFIACPSCSRQNFDVVKTMNELEGRLEDLLVPLDVAVIGCVVNGPGEAKESHVGLTGGTPNLVYIDGKPSQKLNNDNLVDELEKLIRQKAAEKAEADAALIARG.

Cys270, Cys273, Cys305, and Glu312 together coordinate [4Fe-4S] cluster.

Belongs to the IspG family. [4Fe-4S] cluster serves as cofactor.

The catalysed reaction is (2E)-4-hydroxy-3-methylbut-2-enyl diphosphate + oxidized [flavodoxin] + H2O + 2 H(+) = 2-C-methyl-D-erythritol 2,4-cyclic diphosphate + reduced [flavodoxin]. It functions in the pathway isoprenoid biosynthesis; isopentenyl diphosphate biosynthesis via DXP pathway; isopentenyl diphosphate from 1-deoxy-D-xylulose 5-phosphate: step 5/6. Its function is as follows. Converts 2C-methyl-D-erythritol 2,4-cyclodiphosphate (ME-2,4cPP) into 1-hydroxy-2-methyl-2-(E)-butenyl 4-diphosphate. This chain is 4-hydroxy-3-methylbut-2-en-1-yl diphosphate synthase (flavodoxin), found in Pseudomonas entomophila (strain L48).